The following is a 671-amino-acid chain: ABC transporter ATP-binding protein/permease wht-1 (671 aa).

Residues 1–408 (MHKAPISTLI…SWLTVIRDPN (408 aa)) are Cytoplasmic-facing. In terms of domain architecture, ABC transporter spans 64–310 (TNFVDRFRNN…FEKCGYPCPA (247 aa)). 100 to 107 (GSSGAGKT) serves as a coordination point for ATP. Residues 409 to 429 (LLSVRLLQILITAFITGIVFF) traverse the membrane as a helical segment. Residues 430 to 451 (QTPVTPATIISINGIMFNHIRN) lie on the Extracellular side of the membrane. A helical transmembrane segment spans residues 452–472 (MNFMLQFPNVPVITAELPIVL). At 473–497 (RENANGVYRTSAYFLAKNIAELPQY) the chain is on the cytoplasmic side. Residues 498-518 (IILPILYNTIVYWMSGLYPNF) form a helical membrane-spanning segment. Residues 519–525 (WNYCFAS) are Extracellular-facing. A helical transmembrane segment spans residues 526-546 (LVTILITNVAISISYAVATIF). Over 547-550 (ANTD) the chain is Cytoplasmic. A helical transmembrane segment spans residues 551-571 (VAMTILPIFVVPIMAFGGFFI). Topologically, residues 572–644 (TFDAIPSYFK…DFSASHKIFD (73 aa)) are extracellular. Residues 645-665 (ISILFGMFIGIRIIAYVALLI) form a helical membrane-spanning segment. At 666-671 (RSYNNT) the chain is on the cytoplasmic side.

Belongs to the ABC transporter superfamily. ABCG family. Eye pigment precursor importer (TC 3.A.1.204) subfamily. Expressed in the intestine in both larvae and adults. Expressed in the gut of males.

The protein localises to the membrane. In terms of biological role, required for efficient RNA interference (RNAi). Plays a role in germline development. The protein is ABC transporter ATP-binding protein/permease wht-1 of Caenorhabditis elegans.